A 151-amino-acid chain; its full sequence is Nucleoside diphosphate kinase (151 aa).

K11, F59, R87, R104, and N114 together coordinate ATP. H117 acts as the Pros-phosphohistidine intermediate in catalysis.

This sequence belongs to the NDK family. As to quaternary structure, homotrimer. Mg(2+) serves as cofactor.

It catalyses the reaction a 2'-deoxyribonucleoside 5'-diphosphate + ATP = a 2'-deoxyribonucleoside 5'-triphosphate + ADP. The enzyme catalyses a ribonucleoside 5'-diphosphate + ATP = a ribonucleoside 5'-triphosphate + ADP. Major role in the synthesis of nucleoside triphosphates other than ATP. The ATP gamma phosphate is transferred to the NDP beta phosphate via a ping-pong mechanism, using a phosphorylated active-site intermediate. The protein is Nucleoside diphosphate kinase (ndk1) of Schizosaccharomyces pombe (strain 972 / ATCC 24843) (Fission yeast).